Reading from the N-terminus, the 49-residue chain is Osteocalcin (49 aa).

In terms of domain architecture, Gla spans tyrosine 1–glycine 47. Residue proline 9 is modified to Hydroxyproline. Ca(2+) is bound by residues glutamate 17, glutamate 21, glutamate 24, and aspartate 30. Residues glutamate 17, glutamate 21, and glutamate 24 each carry the 4-carboxyglutamate modification. An intrachain disulfide couples cysteine 23 to cysteine 29.

Belongs to the osteocalcin/matrix Gla protein family. Post-translationally, gamma-carboxyglutamate residues are formed by vitamin K dependent carboxylation by GGCX. These residues are essential for the binding of calcium. Decarboxylation promotes the hormone activity.

The protein localises to the secreted. The carboxylated form is one of the main organic components of the bone matrix, which constitutes 1-2% of the total bone protein. It acts as a negative regulator of bone formation and is required to limit bone formation without impairing bone resorption or mineralization. The carboxylated form binds strongly to apatite and calcium. Its function is as follows. The uncarboxylated form acts as a hormone secreted by osteoblasts, which regulates different cellular processes, such as energy metabolism, male fertility and brain development. Regulates of energy metabolism by acting as a hormone favoring pancreatic beta-cell proliferation, insulin secretion and sensitivity and energy expenditure. Uncarboxylated osteocalcin hormone also promotes testosterone production in the testes: acts as a ligand for G protein-coupled receptor GPRC6A at the surface of Leydig cells, initiating a signaling response that promotes the expression of enzymes required for testosterone synthesis in a CREB-dependent manner. Also acts as a regulator of brain development: osteocalcin hormone crosses the blood-brain barrier and acts as a ligand for GPR158 on neurons, initiating a signaling response that prevents neuronal apoptosis in the hippocampus, favors the synthesis of all monoamine neurotransmitters and inhibits that of gamma-aminobutyric acid (GABA). Osteocalcin also crosses the placenta during pregnancy and maternal osteocalcin is required for fetal brain development. This chain is Osteocalcin (BGLAP), found in Capra hircus (Goat).